We begin with the raw amino-acid sequence, 470 residues long: FRIGIDA-like protein 1 (470 aa).

Positions 336–369 (KDQNLESEFTQEKVEERVEELEKNKALRKRNTTN) form a coiled coil. The disordered stretch occupies residues 355–400 (ELEKNKALRKRNTTNPPKQEPQQKGKKRTRDCKNGSQVPVPSQQLL). The segment covering 388–400 (NGSQVPVPSQQLL) has biased composition (polar residues).

This sequence belongs to the Frigida family. In terms of assembly, component of the transcription activator complex FRI-C composed of FRI, FRL1, SUF4, FLX and FES1. Interacts with FRI and SUF4. Expressed during seed development and in dry seed. Preferentially expressed in the chalazal endosperm during early stages of seed development.

Functionally, required for FRI-mediated up-regulation of FLC transcripts, but not redundant with FRI and only partially redundant with FRL2. Required for the stabilization of the FRI-C complex. The sequence is that of FRIGIDA-like protein 1 (FRL1) from Arabidopsis thaliana (Mouse-ear cress).